A 315-amino-acid chain; its full sequence is Capsid protein (315 aa).

The segment at 1–60 (MPPKPAPGDNEGNASGSTPTPPPPPPARTAEEARLRLAEMEREREQEQLLEEMNSNTPAE) is disordered. Over residues 29 to 47 (TAEEARLRLAEMEREREQE) the composition is skewed to basic and acidic residues.

It belongs to the potexviruses coat protein family.

It localises to the virion. Functionally, required for genome encapsidation. Forms ribonucleoprotein complexes along with TGB1 helicase and viral RNA. This chain is Capsid protein, found in Chrysanthemum morifolium (Florist's daisy).